Consider the following 149-residue polypeptide: Putative glycine cleavage system H protein 3 (149 aa).

One can recognise a Lipoyl-binding domain in the interval 39 to 121 (TCTLGITKYA…EDKGWLIKME (83 aa)). Lys80 bears the N6-lipoyllysine mark.

This sequence belongs to the GcvH family. The glycine cleavage system is composed of four proteins: P, T, L and H. Requires (R)-lipoate as cofactor.

Functionally, the glycine cleavage system catalyzes the degradation of glycine. The H protein shuttles the methylamine group of glycine from the P protein to the T protein. The polypeptide is Putative glycine cleavage system H protein 3 (gcvH3) (Dictyostelium discoideum (Social amoeba)).